The following is a 520-amino-acid chain: FNIP repeat-containing protein DDB_G0274063/DDB_G0272642 (520 aa).

Disordered regions lie at residues 47 to 86 and 100 to 121; these read QQQSNNNNNNNNNNNNNNNNNNFINFSNHTNNINNNIDNR and NISSSSPYTLTSTPSSSSSSSS. Low complexity predominate over residues 51-84; it reads NNNNNNNNNNNNNNNNNNFINFSNHTNNINNNID. FNIP repeat units lie at residues 242–285, 286–331, 332–406, and 453–496; these read YNNN…FGES, FNQD…FGLS, YNQP…FGVQ, and FNQQ…FHNS.

This is FNIP repeat-containing protein DDB_G0274063/DDB_G0272642 from Dictyostelium discoideum (Social amoeba).